The chain runs to 368 residues: Probable multidrug ABC transporter permease YbhR (368 aa).

At 1–24 (MFHRLWTLIRKELQSLLREPQTRA) the chain is on the cytoplasmic side. A helical membrane pass occupies residues 25-45 (ILILPVLIQVILFPFAATLEV). Over 46–173 (TNATIAIYDE…WYNPNLDYKW (128 aa)) the chain is Periplasmic. In terms of domain architecture, ABC transmembrane type-2 spans 129 to 366 (AQIAANYLQQ…SAAYAMFRRK (238 aa)). Residues 174–194 (FVVPSLIAMITTIGVMIVTSL) traverse the membrane as a helical segment. The Cytoplasmic portion of the chain corresponds to 195–222 (SVAREREQGTLDQLLVSPLTTWQIFIGK). The helical transmembrane segment at 223 to 243 (AVPALIVATFQATIVLAIGIW) threads the bilayer. The Periplasmic segment spans residues 244-253 (AYQIPFAGSL). Residues 254-274 (ALFYFTMVIYGLSLVGFGLLI) traverse the membrane as a helical segment. Residues 275–284 (SSLCSTQQQA) are Cytoplasmic-facing. A helical membrane pass occupies residues 285–305 (FIGVFVFMMPAILLSGYVSPV). The Periplasmic segment spans residues 306–339 (ENMPVWLQNLTWINPIRHFTDITKQIYLKDASLD). A helical membrane pass occupies residues 340–360 (IVWNSLWPLLVITATTGSAAY). Residues 361-368 (AMFRRKVM) lie on the Cytoplasmic side of the membrane.

It belongs to the ABC-2 integral membrane protein family. As to quaternary structure, the complex is probably composed of two ATP-binding proteins (YbhF) and two transmembrane proteins (YbhR and YbhS).

The protein resides in the cell inner membrane. Functionally, part of the ABC transporter complex YbhFSR that could be involved in efflux of cefoperazone. Probably involved in the translocation of the substrate across the membrane. This chain is Probable multidrug ABC transporter permease YbhR (ybhR), found in Escherichia coli O157:H7.